The chain runs to 1052 residues: Focal adhesion kinase 1 (1052 aa).

The segment at 1-27 (MAAAYLDPNLNHTPNSSTKTHLGTGME) is disordered. N-acetylalanine is present on A2. The residue at position 5 (Y5) is a Phosphotyrosine. Residues 10-21 (LNHTPNSSTKTH) are compositionally biased toward polar residues. A Phosphothreonine modification is found at T13. Phosphoserine is present on residues S29 and S54. Residues 35–355 (RVLKVFHYFE…GYCRLVNGTS (321 aa)) form the FERM domain. K152 participates in a covalent cross-link: Glycyl lysine isopeptide (Lys-Gly) (interchain with G-Cter in SUMO). Y397 carries the post-translational modification Phosphotyrosine; by autocatalysis. Phosphotyrosine is present on Y407. One can recognise a Protein kinase domain in the interval 422–680 (IELGRCIGEG…ELKAQLSTIL (259 aa)). Residues 428–434 (IGEGQFG), K454, and 500–502 (ELC) each bind ATP. The Proton acceptor role is filled by D546. Y570 is subject to Phosphotyrosine. A phosphotyrosine; by RET and SRC mark is found at Y576 and Y577. A Phosphoserine modification is found at S580. The span at 684–697 (KAQQEERMRMESRR) shows a compositional bias: basic and acidic residues. 2 disordered regions span residues 684 to 734 (KAQQ…PSPQ) and 839 to 922 (LSRG…RSND). The tract at residues 707–1052 (GSDEAPPKPS…LKMLGQTRPH (346 aa)) is interaction with TGFB1I1. S722 is modified (phosphoserine). S732 is modified (phosphoserine; by CDK5). Basic and acidic residues predominate over residues 839-849 (LSRGSIDREDG). S843 is subject to Phosphoserine. Y861 is subject to Phosphotyrosine. Residues 869-880 (PAAPPKKPPRPG) are compositionally biased toward pro residues. A phosphoserine mark is found at S887 and S910. Positions 912-1052 (PPTANLDRSN…LKMLGQTRPH (141 aa)) are interaction with ARHGEF28. T914 bears the Phosphothreonine mark. Position 925 is a phosphotyrosine (Y925).

Belongs to the protein kinase superfamily. Tyr protein kinase family. FAK subfamily. As to quaternary structure, interacts (via first Pro-rich region) with CAS family members (via SH3 domain), including BCAR1, BCAR3, and CASS4. Interacts with NEDD9 (via SH3 domain). Interacts with GIT1. Interacts with SORBS1. Interacts with ARHGEF28. Interacts with SHB. Part of a complex composed of THSD1, PTK2/FAK1, TLN1 and VCL. Interacts with PXN and TLN1. Interacts with STAT1. Interacts with DCC. Interacts with WASL. Interacts with ARHGEF7. Interacts with GRB2 and GRB7. Component of a complex that contains at least FER, CTTN and PTK2/FAK1. Interacts with BMX. Interacts with TGFB1I1. Interacts with STEAP4. Interacts with ZFYVE21. Interacts with ESR1. Interacts with PIK3R1 or PIK3R2. Interacts with SRC, FGR, FLT4 and RET. Interacts with EPHA2 in resting cells; activation of EPHA2 recruits PTPN11, leading to dephosphorylation of PTK2/FAK1 and dissociation of the complex. Interacts with EPHA1 (kinase activity-dependent). Interacts with CD4; this interaction requires the presence of HIV-1 gp120. Interacts with PIAS1. Interacts with ARHGAP26 and SHC1. Interacts with RB1CC1; this inhibits PTK2/FAK1 activity and activation of downstream signaling pathways. Interacts with P53/TP53 and MDM2. Interacts with LPXN (via LD motif 3). Interacts with MISP. Interacts with CIB1 isoform 2. Interacts with CD36. Interacts with EMP2; regulates PTK2 activation and localization. Interacts with DSCAM. Interacts with AMBRA1. Interacts (when tyrosine-phosphorylated) with tensin TNS1; the interaction is increased by phosphorylation of TNS1. Phosphorylated on tyrosine residues upon activation, e.g. upon integrin signaling. Tyr-397 is the major autophosphorylation site, but other kinases can also phosphorylate this residue. Phosphorylation at Tyr-397 promotes interaction with SRC and SRC family members, leading to phosphorylation at Tyr-576, Tyr-577 and at additional tyrosine residues. FGR promotes phosphorylation at Tyr-397 and Tyr-576. FER promotes phosphorylation at Tyr-577, Tyr-861 and Tyr-925, even when cells are not adherent. Tyr-397, Tyr-576 and Ser-722 are phosphorylated only when cells are adherent. Phosphorylation at Tyr-397 is important for interaction with BMX, PIK3R1 and SHC1. Phosphorylation at Tyr-925 is important for interaction with GRB2. Dephosphorylated by PTPN11; PTPN11 is recruited to PTK2 via EPHA2 (tyrosine phosphorylated). Microtubule-induced dephosphorylation at Tyr-397 is crucial for the induction of focal adhesion disassembly; this dephosphorylation could be catalyzed by PTPN11 and regulated by ZFYVE21. Phosphorylation on tyrosine residues is enhanced by NTN1. In terms of processing, sumoylated; this enhances autophosphorylation. Detected in B and T-lymphocytes. Isoform 1 and isoform 6 are detected in lung fibroblasts (at protein level). Ubiquitous. Expressed in epithelial cells (at protein level).

The protein resides in the cell junction. The protein localises to the focal adhesion. It localises to the cell membrane. It is found in the cytoplasm. Its subcellular location is the perinuclear region. The protein resides in the cell cortex. The protein localises to the cytoskeleton. It localises to the microtubule organizing center. It is found in the centrosome. Its subcellular location is the nucleus. The protein resides in the cilium basal body. The enzyme catalyses L-tyrosyl-[protein] + ATP = O-phospho-L-tyrosyl-[protein] + ADP + H(+). Subject to autoinhibition, mediated by interactions between the FERM domain and the kinase domain. Activated by autophosphorylation at Tyr-397. This promotes interaction with SRC and phosphorylation at Tyr-576 and Tyr-577 in the kinase activation loop. Phosphorylation at Tyr-576 and Tyr-577 is required for maximal kinase activity. Inhibited by TAC544, TAE226, PF-573,228 and PF-562,271. Functionally, non-receptor protein-tyrosine kinase that plays an essential role in regulating cell migration, adhesion, spreading, reorganization of the actin cytoskeleton, formation and disassembly of focal adhesions and cell protrusions, cell cycle progression, cell proliferation and apoptosis. Required for early embryonic development and placenta development. Required for embryonic angiogenesis, normal cardiomyocyte migration and proliferation, and normal heart development. Regulates axon growth and neuronal cell migration, axon branching and synapse formation; required for normal development of the nervous system. Plays a role in osteogenesis and differentiation of osteoblasts. Functions in integrin signal transduction, but also in signaling downstream of numerous growth factor receptors, G-protein coupled receptors (GPCR), EPHA2, netrin receptors and LDL receptors. Forms multisubunit signaling complexes with SRC and SRC family members upon activation; this leads to the phosphorylation of additional tyrosine residues, creating binding sites for scaffold proteins, effectors and substrates. Regulates numerous signaling pathways. Promotes activation of phosphatidylinositol 3-kinase and the AKT1 signaling cascade. Promotes activation of MAPK1/ERK2, MAPK3/ERK1 and the MAP kinase signaling cascade. Promotes localized and transient activation of guanine nucleotide exchange factors (GEFs) and GTPase-activating proteins (GAPs), and thereby modulates the activity of Rho family GTPases. Signaling via CAS family members mediates activation of RAC1. Phosphorylates NEDD9 following integrin stimulation. Recruits the ubiquitin ligase MDM2 to P53/TP53 in the nucleus, and thereby regulates P53/TP53 activity, P53/TP53 ubiquitination and proteasomal degradation. Phosphorylates SRC; this increases SRC kinase activity. Phosphorylates ACTN1, ARHGEF7, GRB7, RET and WASL. Promotes phosphorylation of PXN and STAT1; most likely PXN and STAT1 are phosphorylated by a SRC family kinase that is recruited to autophosphorylated PTK2/FAK1, rather than by PTK2/FAK1 itself. Promotes phosphorylation of BCAR1; GIT2 and SHC1; this requires both SRC and PTK2/FAK1. Promotes phosphorylation of BMX and PIK3R1. Isoform 6 (FRNK) does not contain a kinase domain and inhibits PTK2/FAK1 phosphorylation and signaling. Its enhanced expression can attenuate the nuclear accumulation of LPXN and limit its ability to enhance serum response factor (SRF)-dependent gene transcription. Its function is as follows. Isoform 6 (FRNK) does not contain a kinase domain and inhibits PTK2/FAK1 phosphorylation and signaling. Its enhanced expression can attenuate the nuclear accumulation of LPXN and limit its ability to enhance serum response factor (SRF)-dependent gene transcription. This is Focal adhesion kinase 1 from Homo sapiens (Human).